The chain runs to 163 residues: Protein MATERNALLY EXPRESSED GENE 5 (163 aa).

The 80-residue stretch at 38–117 (STLYIEGLPA…DDVNVSAPAE (80 aa)) folds into the RRM domain. 2 disulfides stabilise this stretch: cysteine 140/cysteine 162 and cysteine 143/cysteine 151.

Belongs to the MEG family. Ubiquitous.

This chain is Protein MATERNALLY EXPRESSED GENE 5 (MEG5), found in Zea mays (Maize).